Here is a 95-residue protein sequence, read N- to C-terminus: MKIEVIKKEQDLLEFYLEGEDHTFANLLTETLRENPHVKFVAYTIEHPILMARKPRFRVVTDGKITPEKALEEAAKKIFDRAKEVLDAWEKAIKG.

It belongs to the archaeal Rpo11/eukaryotic RPB11/RPC19 RNA polymerase subunit family. As to quaternary structure, part of the RNA polymerase complex.

Its subcellular location is the cytoplasm. The catalysed reaction is RNA(n) + a ribonucleoside 5'-triphosphate = RNA(n+1) + diphosphate. DNA-dependent RNA polymerase (RNAP) catalyzes the transcription of DNA into RNA using the four ribonucleoside triphosphates as substrates. The polypeptide is DNA-directed RNA polymerase subunit Rpo11 (Pyrococcus abyssi (strain GE5 / Orsay)).